The primary structure comprises 307 residues: Streptomycin 6-kinase (307 aa).

L133 to A145 contacts streptomycin. Catalysis depends on D201, which acts as the Proton acceptor.

It belongs to the aminoglycoside phosphotransferase family.

The catalysed reaction is streptomycin + ATP = streptomycin 6-phosphate + ADP + H(+). Functionally, the aminoglycoside phosphotransferases achieve inactivation of their antibiotic substrates by phosphorylation. The polypeptide is Streptomycin 6-kinase (sph) (Streptomyces glaucescens).